Here is a 673-residue protein sequence, read N- to C-terminus: MESIIQQINQLRTSLRHHEYQYHVLDAPEVPDAEYDRLMGELRALESAHPELITADSPTQRVGAAPLAAFDQVRHEVPMLSLDNVFDEESFLAFYKRVQDRLKSSDPLTFCCELKLDGLAVSLLYEDGELVRAATRGDGTTGENITSNVRTIRAIPLRLTGDNIPRRLEVRGEVFMPQAGFEQMNEEARRKDGKIFANPRNAAAGSIRQLDPRITAKRPLTFFCYGVGLLEGGELPRSHWQRLMQFKDWGLPVSDRAKRCTGSDEVLAFYRQVEQDRTQLGFDIDGVVVKIDDIDLQETLGFVARAPRWATAFKFPAQEQITQVREVEFQVGRTGAITPVARLEPVLVAGVIVSNATLHNADEIERLGLRIGDTVIVRRAGDVIPQVVGVIAERRPADAREILFPQHCPVCGSDVERVEGEAVARCTGGLICAAQRKEALKHFVSRRALDVDGMGDKIIEQLVEKEYVKNPADLFRLSAGILTGLDRMGPKSAQNLVNALEKSKQTTFARFLYALGIREVGEATAANLAAHFGTLDKLLAADIEALKEVPEVGEIVAKHTRHFLDEELNQQVIQELVSDEIGINWPAPVVIVAEEIDSPFAGKTVVLTGSLSQLSRDEAKDRLTALGAKVSGSVSKKTDLVIAGEAAGSKLVKAQELGIEVIDEAEMIRLLGA.

Residues 32 to 36 (DAEYD), 81 to 82 (SL), and Glu-113 each bind NAD(+). Lys-115 serves as the catalytic N6-AMP-lysine intermediate. NAD(+)-binding residues include Arg-136, Glu-173, Lys-290, and Lys-314. Residues Cys-408, Cys-411, Cys-426, and Cys-432 each coordinate Zn(2+). In terms of domain architecture, BRCT spans 595–673 (EIDSPFAGKT…EAEMIRLLGA (79 aa)).

This sequence belongs to the NAD-dependent DNA ligase family. LigA subfamily. Mg(2+) serves as cofactor. Requires Mn(2+) as cofactor.

It catalyses the reaction NAD(+) + (deoxyribonucleotide)n-3'-hydroxyl + 5'-phospho-(deoxyribonucleotide)m = (deoxyribonucleotide)n+m + AMP + beta-nicotinamide D-nucleotide.. DNA ligase that catalyzes the formation of phosphodiester linkages between 5'-phosphoryl and 3'-hydroxyl groups in double-stranded DNA using NAD as a coenzyme and as the energy source for the reaction. It is essential for DNA replication and repair of damaged DNA. The chain is DNA ligase from Serratia proteamaculans (strain 568).